The following is a 207-amino-acid chain: dTTP/UTP pyrophosphatase (207 aa).

The Proton acceptor role is filled by Asp79.

This sequence belongs to the Maf family. YhdE subfamily. A divalent metal cation serves as cofactor.

Its subcellular location is the cytoplasm. It catalyses the reaction dTTP + H2O = dTMP + diphosphate + H(+). The catalysed reaction is UTP + H2O = UMP + diphosphate + H(+). Nucleoside triphosphate pyrophosphatase that hydrolyzes dTTP and UTP. May have a dual role in cell division arrest and in preventing the incorporation of modified nucleotides into cellular nucleic acids. This Rhodopseudomonas palustris (strain ATCC BAA-98 / CGA009) protein is dTTP/UTP pyrophosphatase.